A 334-amino-acid polypeptide reads, in one-letter code: uncharacterized protein (334 aa).

WD repeat units lie at residues 56–86 (LKGE…KLWT), 98–128 (KPVA…RIWD), 139–169 (GHTS…EGWS), 220–250 (TDQG…RVFN), and 262–291 (LDDG…RVWN).

This is an uncharacterized protein from Synechocystis sp. (strain ATCC 27184 / PCC 6803 / Kazusa).